The chain runs to 92 residues: DNA-directed RNA polymerase subunit Rpo11 (92 aa).

Belongs to the archaeal Rpo11/eukaryotic RPB11/RPC19 RNA polymerase subunit family. As to quaternary structure, part of the RNA polymerase complex.

The protein resides in the cytoplasm. The enzyme catalyses RNA(n) + a ribonucleoside 5'-triphosphate = RNA(n+1) + diphosphate. Functionally, DNA-dependent RNA polymerase (RNAP) catalyzes the transcription of DNA into RNA using the four ribonucleoside triphosphates as substrates. This is DNA-directed RNA polymerase subunit Rpo11 from Methanosarcina acetivorans (strain ATCC 35395 / DSM 2834 / JCM 12185 / C2A).